The chain runs to 335 residues: S-adenosylmethionine:tRNA ribosyltransferase-isomerase (335 aa).

The protein belongs to the QueA family. In terms of assembly, monomer.

The protein resides in the cytoplasm. The catalysed reaction is 7-aminomethyl-7-carbaguanosine(34) in tRNA + S-adenosyl-L-methionine = epoxyqueuosine(34) in tRNA + adenine + L-methionine + 2 H(+). The protein operates within tRNA modification; tRNA-queuosine biosynthesis. Transfers and isomerizes the ribose moiety from AdoMet to the 7-aminomethyl group of 7-deazaguanine (preQ1-tRNA) to give epoxyqueuosine (oQ-tRNA). This is S-adenosylmethionine:tRNA ribosyltransferase-isomerase from Thermotoga petrophila (strain ATCC BAA-488 / DSM 13995 / JCM 10881 / RKU-1).